The primary structure comprises 291 residues: Bifunctional protein FolD (291 aa).

NADP(+) is bound by residues 168–170, Thr-195, and Val-236; that span reads GRG.

Belongs to the tetrahydrofolate dehydrogenase/cyclohydrolase family. Homodimer.

It catalyses the reaction (6R)-5,10-methylene-5,6,7,8-tetrahydrofolate + NADP(+) = (6R)-5,10-methenyltetrahydrofolate + NADPH. It carries out the reaction (6R)-5,10-methenyltetrahydrofolate + H2O = (6R)-10-formyltetrahydrofolate + H(+). It functions in the pathway one-carbon metabolism; tetrahydrofolate interconversion. In terms of biological role, catalyzes the oxidation of 5,10-methylenetetrahydrofolate to 5,10-methenyltetrahydrofolate and then the hydrolysis of 5,10-methenyltetrahydrofolate to 10-formyltetrahydrofolate. This chain is Bifunctional protein FolD, found in Bifidobacterium adolescentis (strain ATCC 15703 / DSM 20083 / NCTC 11814 / E194a).